The following is a 58-amino-acid chain: uncharacterized protein (58 aa).

To A.fulgidus AF2407.1.

This is an uncharacterized protein from Pyrococcus abyssi (strain GE5 / Orsay).